The following is a 477-amino-acid chain: Histone-lysine N-methyltransferase SUV39H2 (477 aa).

Residues 1–59 are disordered; it reads MATARAKARGSEAGARCHRAPGPPPRPKARRTARRRRAETLTARRSRPSAGERRAGSQR. The segment covering 27 to 37 has biased composition (basic residues); the sequence is PKARRTARRRR. In terms of domain architecture, Chromo spans 118 to 176; it reads YEVEYLCDYKVAKGVEYYLVKWKGWPDSTNTWEPLRNLRCPQLLRQFSDDKKTYLAQER. A Pre-SET domain is found at 256 to 314; it reads FGCSCTDCFFDKCCPAEAGVVLAYNKKQQIKIQPGTPIYECNSRCRCGPECPNRIVQKG. Zn(2+)-binding residues include cysteine 258, cysteine 260, cysteine 263, cysteine 268, cysteine 269, cysteine 296, cysteine 300, cysteine 302, and cysteine 306. The SET domain maps to 317-440; sequence YSLCIFKTSN…AGEELTFDYQ (124 aa). S-adenosyl-L-methionine-binding positions include 328 to 330, tyrosine 371, and 397 to 398; these read CGW and NH. Residue cysteine 400 participates in Zn(2+) binding. Phosphoserine is present on residues serine 448, serine 451, and serine 455. A Post-SET domain is found at 461–477; sequence VRTQCKCGAETCRGYLN. Positions 465, 467, and 472 each coordinate Zn(2+).

It belongs to the class V-like SAM-binding methyltransferase superfamily. Histone-lysine methyltransferase family. Suvar3-9 subfamily. As to quaternary structure, interacts with SMAD5. The large PER complex involved in the histone methylation is composed of at least PER2, CBX3, TRIM28, SUV39H1 and/or SUV39H2; CBX3 mediates the formation of the complex. In terms of processing, ubiquitinated by the DCX(DCAF13) E3 ubiquitin ligase complex, leading to its degradation. Testis specific; predominant expression in type B spermatogonia and preleptotene spermatocytes.

It localises to the nucleus. Its subcellular location is the chromosome. The protein localises to the centromere. The catalysed reaction is L-lysyl(9)-[histone H3] + 3 S-adenosyl-L-methionine = N(6),N(6),N(6)-trimethyl-L-lysyl(9)-[histone H3] + 3 S-adenosyl-L-homocysteine + 3 H(+). Functionally, histone methyltransferase that specifically trimethylates 'Lys-9' of histone H3 using monomethylated H3 'Lys-9' as substrate. H3 'Lys-9' trimethylation represents a specific tag for epigenetic transcriptional repression by recruiting HP1 (CBX1, CBX3 and/or CBX5) proteins to methylated histones. Mainly functions in heterochromatin regions, thereby playing a central role in the establishment of constitutive heterochromatin at pericentric and telomere regions. H3 'Lys-9' trimethylation is also required to direct DNA methylation at pericentric repeats. SUV39H1 is targeted to histone H3 via its interaction with RB1 and is involved in many processes, such as cell cycle regulation, transcriptional repression and regulation of telomere length. May participate in regulation of higher-order chromatin organization during spermatogenesis. Recruited by the large PER complex to the E-box elements of the circadian target genes such as PER2 itself or PER1, contributes to the conversion of local chromatin to a heterochromatin-like repressive state through H3 'Lys-9' trimethylation. In Mus musculus (Mouse), this protein is Histone-lysine N-methyltransferase SUV39H2 (Suv39h2).